The following is a 390-amino-acid chain: GTP 3',8-cyclase, mitochondrial (390 aa).

The transit peptide at 1–45 (MRRCFSKITDCHLGFKNSNFLLVGSEVGSGSVTRTITTTTSERLF) directs the protein to the mitochondrion. The region spanning 69–290 (KFGRLHTYLR…PSIKRMQDHP (222 aa)) is the Radical SAM core domain. Position 78 (Arg78) interacts with GTP. [4Fe-4S] cluster contacts are provided by Cys85 and Cys89. Tyr91 is a binding site for S-adenosyl-L-methionine. [4Fe-4S] cluster is bound at residue Cys92. Position 128 (Arg128) interacts with GTP. Gly132 is an S-adenosyl-L-methionine binding site. A GTP-binding site is contributed by Thr159. Ser183 provides a ligand contact to S-adenosyl-L-methionine. Position 220 (Lys220) interacts with GTP. Met254 contributes to the S-adenosyl-L-methionine binding site. [4Fe-4S] cluster contacts are provided by Cys317 and Cys320. A GTP-binding site is contributed by 322 to 324 (RLR). Cys334 contacts [4Fe-4S] cluster.

This sequence belongs to the radical SAM superfamily. MoaA family. In terms of assembly, homodimer. Requires [4Fe-4S] cluster as cofactor. As to expression, expressed in all organs, with an abundant expression in the roots.

It is found in the mitochondrion matrix. It catalyses the reaction GTP + AH2 + S-adenosyl-L-methionine = (8S)-3',8-cyclo-7,8-dihydroguanosine 5'-triphosphate + 5'-deoxyadenosine + L-methionine + A + H(+). Its pathway is cofactor biosynthesis; molybdopterin biosynthesis. Its function is as follows. Catalyzes the cyclization of GTP to (8S)-3',8-cyclo-7,8-dihydroguanosine 5'-triphosphate. The polypeptide is GTP 3',8-cyclase, mitochondrial (CNX2) (Arabidopsis thaliana (Mouse-ear cress)).